Reading from the N-terminus, the 394-residue chain is Anhydro-N-acetylmuramic acid kinase (394 aa).

Residue 11 to 18 coordinates ATP; it reads GTSADGID.

It belongs to the anhydro-N-acetylmuramic acid kinase family.

The enzyme catalyses 1,6-anhydro-N-acetyl-beta-muramate + ATP + H2O = N-acetyl-D-muramate 6-phosphate + ADP + H(+). It functions in the pathway amino-sugar metabolism; 1,6-anhydro-N-acetylmuramate degradation. The protein operates within cell wall biogenesis; peptidoglycan recycling. In terms of biological role, catalyzes the specific phosphorylation of 1,6-anhydro-N-acetylmuramic acid (anhMurNAc) with the simultaneous cleavage of the 1,6-anhydro ring, generating MurNAc-6-P. Is required for the utilization of anhMurNAc either imported from the medium or derived from its own cell wall murein, and thus plays a role in cell wall recycling. The chain is Anhydro-N-acetylmuramic acid kinase from Deinococcus geothermalis (strain DSM 11300 / CIP 105573 / AG-3a).